The following is a 289-amino-acid chain: N-methyltransferase FrzE (289 aa).

This sequence belongs to the methyltransferase superfamily.

It carries out the reaction (1S,4S)-4-[(4-hydroxyphenyl)methyl]-2,5-diazaspiro[bicyclo[3.2.1]octane-6,1'-cyclohexan]-4'-one + S-adenosyl-L-methionine = (1S,4S)-4-[(4-hydroxyphenyl)methyl]-2-methyl-2,5-diazaspiro[bicyclo[3.2.1]octane-6,1'-cyclohexan]-4'-one + S-adenosyl-L-homocysteine + H(+). It catalyses the reaction (1S,4S)-4-[(4-methoxyphenyl)methyl]-2,5-diazaspiro[bicyclo[3.2.1]octane-6,1'-cyclohexan]-4'-one + S-adenosyl-L-methionine = (1S,4S)-4-[(4-methoxyphenyl)methyl]-2-methyl-2,5-diazaspiro[bicyclo[3.2.1]octane-6,1'-cyclohexan]-4'-one + S-adenosyl-L-homocysteine + H(+). Its pathway is secondary metabolite biosynthesis. Its function is as follows. N-methyltransferase; part of the gene cluster that mediates the biosynthesis of the alkaloid (-)-FR901483, a potent immunosuppressant that shows efficacy in animal models and a probable inhibitor of purine nucleotide biosynthesis by targeting phosphoribosylpyrophosphate amidotransferase (PPAT). Within the pathway, FrzE methylates the amine at position C10'. The biosynthesis of (-)-FR901483 starts with the condensation of two L-tyrosines to yield (S,S)-dityrosyl-piperazine. This process occurs in 3 steps with the non-canonical nonribosomal peptide synthetase FrzA catalyzing the reduction of L-tyrosine into L-tyrosinal, the spontaneous condensation of 2 L-tyrosinal units, and the subsequent reduction by the NmrA-like family domain-containing oxidoreductase FrzB. The cytochrome P450 monooxygenase FrzC then performs coupling between N10 and C1' to morph the piperazine into a 1,4-diazabicyclo[3.2.1]octane spiro-fused to a 2,5-cyclohexadienone. The dienone portion is further reduced to cyclohexanone by the flavin-dependent reductase FrzD. The methyltranserases (MTs) FrzE and FrzF are then involved in the methylation at the C10' amine and the C4 phenolic oxygen, respectively. The order of the two MTs appear to be interchangeable. Cleavage of the C9-N10' bond by the dioxygenase FrzG then leads to formation of a conjugated iminium. In addition to the oxidation of C9, an additional dehydrogenation between C7 and C8 can occur to give a likely shunt product. The next biosynthetic step is the intramolecular aldol condensation catalyzed by the newly identified aldolase FrzH to yield an aza-tricyclic product with the formation of a C9-C3' bond. The short-chain dehydrogenase/reductase FrzI then produces dephospho-(-)-FR901483 that is phosphorylated at C4'-OH into (-)-FR901483 by the phosphotransferase FrzJ. This Cladobotryum sp protein is N-methyltransferase FrzE.